The sequence spans 402 residues: Acetyl-CoA acetyltransferase (402 aa).

C90 serves as the catalytic Acyl-thioester intermediate. CoA-binding residues include Y185 and K230. Y185 is a K(+) binding site. Residue A250 coordinates K(+). Residue S251 coordinates CoA. V348 is a K(+) binding site. Residues H352 and C382 each act as proton acceptor in the active site.

Belongs to the thiolase-like superfamily. Thiolase family. Homotetramer.

It localises to the cytoplasm. Its subcellular location is the cytosol. It carries out the reaction 2 acetyl-CoA = acetoacetyl-CoA + CoA. It participates in metabolic intermediate biosynthesis; (R)-mevalonate biosynthesis; (R)-mevalonate from acetyl-CoA: step 1/3. In terms of biological role, acetyl-CoA acetyltransferase; part of the first module of ergosterol biosynthesis pathway that includes the early steps of the pathway, conserved across all eukaryotes, and which results in the formation of mevalonate from acetyl-coenzyme A (acetyl-CoA). ERG10 catalyzes the formation of acetoacetyl-CoA from acetyl-CoA. The first module starts with the action of the cytosolic acetyl-CoA acetyltransferase ERG10 that catalyzes the formation of acetoacetyl-CoA. The hydroxymethylglutaryl-CoA synthase ERG13 then condenses acetyl-CoA with acetoacetyl-CoA to form HMG-CoA. The 3-hydroxy-3-methylglutaryl-coenzyme A (HMG-CoA) reductase HMG1 finally reduces HMG-CoA to produce mevalonate. This Candida albicans (strain SC5314 / ATCC MYA-2876) (Yeast) protein is Acetyl-CoA acetyltransferase.